Reading from the N-terminus, the 549-residue chain is Arginine--tRNA ligase (549 aa).

Positions 122-132 (ANPTGFLHLGH) match the 'HIGH' region motif.

The protein belongs to the class-I aminoacyl-tRNA synthetase family. As to quaternary structure, monomer.

It is found in the cytoplasm. The enzyme catalyses tRNA(Arg) + L-arginine + ATP = L-arginyl-tRNA(Arg) + AMP + diphosphate. This Mycoplasmoides gallisepticum (strain R(low / passage 15 / clone 2)) (Mycoplasma gallisepticum) protein is Arginine--tRNA ligase.